We begin with the raw amino-acid sequence, 147 residues long: Large ribosomal subunit protein uL13 (147 aa).

This sequence belongs to the universal ribosomal protein uL13 family. As to quaternary structure, part of the 50S ribosomal subunit.

Its function is as follows. This protein is one of the early assembly proteins of the 50S ribosomal subunit, although it is not seen to bind rRNA by itself. It is important during the early stages of 50S assembly. The polypeptide is Large ribosomal subunit protein uL13 (Rhodococcus erythropolis (strain PR4 / NBRC 100887)).